We begin with the raw amino-acid sequence, 563 residues long: MTTKYTIGVDYGTESGRAVLIDLSNGQELADHVTPYRHGVIDQYLPNTNIKLGHEWALQHPLDYVEVLTTSVPAVMKESGVDADDVIGIGVDFTACTMLPVDEEGQPLCLLAQYKDNPHSWVKLWKHHAAQDKANAINEMAEKRGEAFLPRYGGKISSEWMIAKVWQILDEAEDVYNRTDQFLEATDWIVSQMTGKIVKNSCTAGYKAIWHKREGYPSNEFFKALDPRLEHLTTTKLRGDIVPLGERAGGLLPEMAEKMGLNPGIAVAVGNVDAHAAVPAVGVTTPGKLVMAMGTSICHMLLGEKEQEVEGMCGVVEDGIIPGYLGYEAGQSAVGDIFAWFVKHGVSAATFDEAQEKGVNVHALLEEKASQLRPGESGLLALDWWNGNRSILVDTELSGMLLGYTLQTKPEEIYRALLEATAFGTRAIVDAFHGRGVEVHELYACGGLPQKNHLLMQIFADVTNREIKVAASKQTPALGAAMFASVAAGSEVGGYDSIEEAAKKMGRVKDETFKPIPEHVAIYEKLYQEYVTLHDYFGRGANDVMKRLKALKSIQHRPSSLLT.

It belongs to the ribulokinase family.

It catalyses the reaction D-ribulose + ATP = D-ribulose 5-phosphate + ADP + H(+). The enzyme catalyses L-ribulose + ATP = L-ribulose 5-phosphate + ADP + H(+). It participates in carbohydrate degradation; L-arabinose degradation via L-ribulose; D-xylulose 5-phosphate from L-arabinose (bacterial route): step 2/3. The polypeptide is Ribulokinase (Halalkalibacterium halodurans (strain ATCC BAA-125 / DSM 18197 / FERM 7344 / JCM 9153 / C-125) (Bacillus halodurans)).